The chain runs to 609 residues: MRSNGCGDLREQNIDQQVQLCGWVDRRRDHGGVIFIDLRDRSGTVQITVDPDLGADAFTVAEHLRSETVLQVEGKVRARPGESLNDKLATGAVEVLASGITVLNSVKGNLPFPVSVHDEENTREELRLRHRYLDLRRKRMNDNLRLRAQTIQAARRFLEDAGFIEVETPVLTRSTPEGARDYLLPSRVCGGEWFALPQSPQLFKQLLMVGGIERYYQMARCFRDEDLRADRQPEFTQLDIEMSFMDQEQILELNESLICAIWKTVKGIELPRPFPRITWHDAMEHYGTDRPDTRYGMELTNVSDIVKDMGFKVFSGAVKAGGAVKCIAVPGGNDAVSNVRIKPGGDVFSEAQKAGAGGLAFIRVRDGGEIDTIGAIKDNLSDEQRQELLSRTGAEPGTLLLFGAGDTATVNKALDRVRQYLAKELGMVKADRDNDQWNFLWVVDFPMFEFNGDENRYEALHHPFCAPNAEDLGGDASKWSETLPGARAQAYDLVLNGLELGGGSLRIHDSTLQRQVLQTVGLTLEEAQEQFGFLMDALDVGAPPHGGLAFGVDRMVMLLAGEESIRDTIAFPKTQQARCLMTSAPGGVADKQLEELHVASTWVEPDQED.

Residue glutamate 177 participates in L-aspartate binding. The segment at 201 to 204 (QLFK) is aspartate. Position 223 (arginine 223) interacts with L-aspartate. ATP contacts are provided by residues 223 to 225 (RDE) and glutamine 232. Histidine 461 serves as a coordination point for L-aspartate. Glutamate 499 serves as a coordination point for ATP. Arginine 506 is an L-aspartate binding site. 551-554 (GVDR) provides a ligand contact to ATP.

It belongs to the class-II aminoacyl-tRNA synthetase family. Type 1 subfamily. As to quaternary structure, homodimer.

The protein resides in the cytoplasm. The catalysed reaction is tRNA(Asx) + L-aspartate + ATP = L-aspartyl-tRNA(Asx) + AMP + diphosphate. Functionally, aspartyl-tRNA synthetase with relaxed tRNA specificity since it is able to aspartylate not only its cognate tRNA(Asp) but also tRNA(Asn). Reaction proceeds in two steps: L-aspartate is first activated by ATP to form Asp-AMP and then transferred to the acceptor end of tRNA(Asp/Asn). This chain is Aspartate--tRNA(Asp/Asn) ligase, found in Synechococcus sp. (strain CC9605).